Here is a 227-residue protein sequence, read N- to C-terminus: Uracil-DNA glycosylase (227 aa).

Catalysis depends on aspartate 68, which acts as the Proton acceptor.

The protein belongs to the uracil-DNA glycosylase (UDG) superfamily. UNG family.

The protein localises to the cytoplasm. The enzyme catalyses Hydrolyzes single-stranded DNA or mismatched double-stranded DNA and polynucleotides, releasing free uracil.. Its function is as follows. Excises uracil residues from the DNA which can arise as a result of misincorporation of dUMP residues by DNA polymerase or due to deamination of cytosine. This chain is Uracil-DNA glycosylase, found in Mycolicibacterium smegmatis (strain ATCC 700084 / mc(2)155) (Mycobacterium smegmatis).